The sequence spans 284 residues: Nucleotide-binding protein NMB0738 (284 aa).

Position 8–15 (8–15) interacts with ATP; sequence GLSGSGKS. 58 to 61 contributes to the GTP binding site; it reads DVRS.

The protein belongs to the RapZ-like family.

Functionally, displays ATPase and GTPase activities. The chain is Nucleotide-binding protein NMB0738 from Neisseria meningitidis serogroup B (strain ATCC BAA-335 / MC58).